We begin with the raw amino-acid sequence, 1598 residues long: MEQFGGPSGFMPPASYTAPLGKYPTKQPSAAYPSDGGRHATKENPRPAEGQASRQSSSVPSAMASKPIQDPEGHSAQPTSSYCRAQTPRSTPLPVALDEEARLSQYEVIRQIGAGRFGEVFIIRHKATKALLCWKLVFYKGLREKEKKQLVSEVNVMRELRHANIVRYHDRIVCRSRQCLYIVMEYCDAGDLAKQIEAAHKHHGGIDQDRIVLVVVQLIHALAYCHEGVGQERRRVLHRDLKPCNIFLASHPEYPDDSSRCIAKLGDFGLSRHLNMHSMAHSCVGTPYYWSPELLEDGQKTYNVKSDMWALGCVIYEMCTGKTPFAQAQTMPQLKERVRCGPVLPVPGFSDSLNALMASLLQPNPNNRPSALQCLGYTIFRGCSYTPPPLYRSSSAPSWTPRNASPARGSPSSAVSTVSTVTTSPGSSSRTSFSAPSSHDAAASSPASASASSRYQHQRSSSYSSDSAGPSGASAPSQKAPGPGRPPETPSRESFDLASKARPGFFAEAPPPHAFAEASPPESHASEFLPPANGAANEARNERTQRDRTRRAASATAAAAVSAFERQQREGRSMSPDPSAPLASIEEEEEGEGDDAGCGSLGSGSGVTRRMPGASLNREDRREAPGLRHADTHKRDDRDGAIWTGRREEAPFSRPGSELARDFGAASQNKVDTSRFSGASSGKPRPGNPQNEDRASFASDTSARQTVYLSGLSRRCSEPPAAFHSAVSPWDPAPPRLSSAASSSSSSRAVSPSSLRRASSREMKYPTDDRPAVAAGSSGVALARAERGPEPGAPWGNEETEGLHVHGRPSAAPASSFSSERTSRPGHPDEARESEHCFQGRGRFAEAEASPATEGKDPRDSGFEERSGRRDEGRTDGGEAQSFGYWPNGRSDEARDRLGAPSVSPFSSKRITRRSSTAAGLSTYASPSDPAPSARAPAEWRRGAAGSSTVSAAGACGRFLPSPRSWQGNEKSFPSSSDHPSAYPALPHPAAPAYPEPGAQASNQFPRRRQSAFPSVKRLDYEEEHASSACLPTLLSPRFPHHPVSRPAGGVSPRSSQRQALAPTLAGMTFERRLSAGPLSSAPFSAPQERTTRLVGHRHALAADAERAEAPFSHAFRPGHHDRTPVGARRVPPRAETPGVSLDPGFRTGGPLDRGPVGSGGLEGQSFDFAHPTHASSEKKEAETEWSNPTAPVFYSPRSPRNDLPPGDGARSPYSAHLRPGVSEACSSFSVPPTERYEDDKNSHHAGSGGAFSPPTFGSPTPGPVPVGNERTFGRNPSPAATCASFSAKTGLRTPAPNGLAGDSGAFRSTNSLQRTPMSRRVSAPFGAGSAEGATAFGSRYASSGSFSKKFPQGSSSGVHEGGGAFGRRQEGDVSRVDAHGSVSPRSFSFLQRSDAPLSRGQPEGSHFQKHGETRASPDFARKGDSTQTHASGGRDFSQSGPFETQDFTFGEQPTRETRHMAPSPRGIERGGPQGSFVGHDTSFSVYAPRAGHAEGVESGCSAFEAPSESLSRRDGEADRENTVPNANGQMPVSGMPASKQTYGDDCDLYDNSAWTAQKHAPENFHAAVAPYPSSLLTGFAEGQQKAASRSSCLGGDR.

Residues 106–380 (YEVIRQIGAG…ALQCLGYTIF (275 aa)) form the Protein kinase domain. Residues 112 to 120 (IGAGRFGEV) and K135 contribute to the ATP site. The Proton acceptor role is filled by D240.

It belongs to the protein kinase superfamily. NEK Ser/Thr protein kinase family. NIMA subfamily.

The protein localises to the cytoplasm. Its subcellular location is the cytoskeleton. It is found in the microtubule organizing center. It localises to the centrosome. The protein resides in the spindle pole. It catalyses the reaction L-seryl-[protein] + ATP = O-phospho-L-seryl-[protein] + ADP + H(+). The catalysed reaction is L-threonyl-[protein] + ATP = O-phospho-L-threonyl-[protein] + ADP + H(+). With respect to regulation, phosphorylation status of the T-loop (amino acids 267-293) modulates kinase activity and subcellular localization of the protein. Its function is as follows. Probable serine/threonine-protein kinase. Involved in controlling centrosome splitting. Promotes separation of the centrosome outer cores. The protein is Serine/threonine-protein kinase Nek1 of Toxoplasma gondii (strain ATCC 50611 / Me49).